The sequence spans 274 residues: 2,3,4,5-tetrahydropyridine-2,6-dicarboxylate N-succinyltransferase (274 aa).

Substrate contacts are provided by arginine 104 and aspartate 141.

This sequence belongs to the transferase hexapeptide repeat family. As to quaternary structure, homotrimer.

It localises to the cytoplasm. It carries out the reaction (S)-2,3,4,5-tetrahydrodipicolinate + succinyl-CoA + H2O = (S)-2-succinylamino-6-oxoheptanedioate + CoA. It participates in amino-acid biosynthesis; L-lysine biosynthesis via DAP pathway; LL-2,6-diaminopimelate from (S)-tetrahydrodipicolinate (succinylase route): step 1/3. This chain is 2,3,4,5-tetrahydropyridine-2,6-dicarboxylate N-succinyltransferase, found in Escherichia coli O127:H6 (strain E2348/69 / EPEC).